The sequence spans 34 residues: COP9 signalosome complex subunit 5a (34 aa).

This sequence belongs to the peptidase M67A family. CSN5 subfamily. As to quaternary structure, component of the CSN complex, probably composed of CSN1, CSN2, CSN3, CSN4, CSN5 (CSN5A or CSN5B), CSN6 (CSN6A or CSN6B), CSN7 and CSN8. A divalent metal cation serves as cofactor.

It localises to the cytoplasm. The protein localises to the nucleus. Probable protease subunit of the COP9 signalosome complex (CSN), a complex involved in various cellular and developmental processes such as photomorphogenesis and auxin and jasmonate responses. The CSN complex is an essential regulator of the ubiquitin (Ubl) conjugation pathway by mediating the deneddylation of the cullin subunits of the SCF-type E3 ligase complexes, leading to decrease the Ubl ligase activity of SCF. In the complex, it probably acts as the catalytic center that mediates the cleavage of Nedd8 from cullins. It however has no metalloprotease activity by itself and requires the other subunits of the CSN complex. The CSN complex is involved in repression of photomorphogenesis in darkness by regulating the activity of COP1-containing Ubl ligase complexes. This is COP9 signalosome complex subunit 5a (CSN5A) from Brassica oleracea (Wild cabbage).